A 271-amino-acid polypeptide reads, in one-letter code: 4-hydroxy-tetrahydrodipicolinate reductase (271 aa).

NAD(+) contacts are provided by residues 11–16 and Glu-37; that span reads GGSGRM. Position 38 (Arg-38) interacts with NADP(+). NAD(+)-binding positions include 101–103 and 125–128; these read GTT and APNM. The active-site Proton donor/acceptor is His-158. His-159 lines the (S)-2,3,4,5-tetrahydrodipicolinate pocket. The Proton donor role is filled by Lys-162. 168–169 contributes to the (S)-2,3,4,5-tetrahydrodipicolinate binding site; it reads GT.

This sequence belongs to the DapB family.

It is found in the cytoplasm. The enzyme catalyses (S)-2,3,4,5-tetrahydrodipicolinate + NAD(+) + H2O = (2S,4S)-4-hydroxy-2,3,4,5-tetrahydrodipicolinate + NADH + H(+). It carries out the reaction (S)-2,3,4,5-tetrahydrodipicolinate + NADP(+) + H2O = (2S,4S)-4-hydroxy-2,3,4,5-tetrahydrodipicolinate + NADPH + H(+). Its pathway is amino-acid biosynthesis; L-lysine biosynthesis via DAP pathway; (S)-tetrahydrodipicolinate from L-aspartate: step 4/4. Functionally, catalyzes the conversion of 4-hydroxy-tetrahydrodipicolinate (HTPA) to tetrahydrodipicolinate. The chain is 4-hydroxy-tetrahydrodipicolinate reductase from Shewanella halifaxensis (strain HAW-EB4).